Consider the following 509-residue polypeptide: Solute carrier family 2, facilitated glucose transporter member 4 (509 aa).

Residues 1–24 (MPSGFQQIGSEDGEPPRQRVTGTL) are Cytoplasmic-facing. The interval 7-13 (QIGSEDG) is interaction with SRFBP1. Serine 10 carries the post-translational modification Phosphoserine. Residues 25–45 (VLAVFSAVLGSLQFGYNIGVI) traverse the membrane as a helical segment. Residues 46-81 (NAPQKVIEQSYNETWLGRQGPEGPGSIPPGTLTTLW) lie on the Extracellular side of the membrane. An N-linked (GlcNAc...) asparagine glycan is attached at asparagine 57. Residues 82 to 102 (ALSVAIFSVGGMISSFLIGII) form a helical membrane-spanning segment. Topologically, residues 103-111 (SQWLGRKRA) are cytoplasmic. A helical membrane pass occupies residues 112 to 132 (MLFNNALAVLGGTLMGLAKAA). Over 133–142 (ASYEMLILGR) the chain is Extracellular. The helical transmembrane segment at 143 to 163 (FFIGAYSGLTSGLVPMYVGEI) threads the bilayer. Over 164 to 171 (APTHLRGA) the chain is Cytoplasmic. The chain crosses the membrane as a helical span at residues 172–192 (LGTLNQLAIVTGILIAQVLGL). A D-glucose-binding site is contributed by glutamine 177. Residues 193–200 (ESMLGTAT) are Extracellular-facing. The helical transmembrane segment at 201–221 (LWPLLLGITVLPALLQMVLLP) threads the bilayer. Residues 222-287 (LCPESPRYLY…LLGSHTHRQP (66 aa)) lie on the Cytoplasmic side of the membrane. Residue cysteine 223 is the site of S-palmitoyl cysteine attachment. At serine 274 the chain carries Phosphoserine; by SGK1. Residues 288 to 308 (LVIAIVLQLSQQLSGINAVFY) form a helical membrane-spanning segment. D-glucose is bound by residues 298–299 (QQ) and asparagine 304. Topologically, residues 309–323 (YSTSIFESAGVEKPA) are extracellular. The chain crosses the membrane as a helical span at residues 324-344 (YATIGAGVVNTVFTLVSVFLV). Asparagine 333 provides a ligand contact to D-glucose. Topologically, residues 345–353 (ERAGRRTLH) are cytoplasmic. A helical membrane pass occupies residues 354–374 (LLGLAGMCGCAILMTVALLLL). The Extracellular portion of the chain corresponds to 375 to 384 (ERVPAMSYVS). The helical transmembrane segment at 385-405 (IVAIFGFVAFFEIGPGPIPWF) threads the bilayer. Residues glutamate 396 and tryptophan 404 each coordinate D-glucose. Over 406 to 417 (IVAELFSQGPRP) the chain is Cytoplasmic. A helical transmembrane segment spans residues 418 to 438 (AAMAVAGFSNWTCNFIIGMGF). Over 439 to 445 (QYVADAM) the chain is Extracellular. Residues 446–466 (GPYVFLLFAVLLLGFFIFTFL) form a helical membrane-spanning segment. Topologically, residues 467-509 (KVPETRGRTFDQISAVFHRTPSLLEQEVKPSTELEYLGPDEHD) are cytoplasmic. Threonine 486 is subject to Phosphothreonine. At serine 488 the chain carries Phosphoserine. Residues 489 to 490 (LL) carry the Dileucine internalization motif motif.

The protein belongs to the major facilitator superfamily. Sugar transporter (TC 2.A.1.1) family. Glucose transporter subfamily. In terms of assembly, binds to DAXX. Interacts via its N-terminus with SRFBP1. Interacts with NDUFA9. Interacts with TRARG1; the interaction is required for proper SLC2A4 recycling after insulin stimulation. Sumoylated. Post-translationally, palmitoylated. Palmitoylation by ZDHHC7 controls the insulin-dependent translocation of GLUT4 to the plasma membrane.

It is found in the cell membrane. The protein resides in the endomembrane system. The protein localises to the cytoplasm. Its subcellular location is the perinuclear region. It carries out the reaction D-glucose(out) = D-glucose(in). Insulin-regulated facilitative glucose transporter, which plays a key role in removal of glucose from circulation. Response to insulin is regulated by its intracellular localization: in the absence of insulin, it is efficiently retained intracellularly within storage compartments in muscle and fat cells. Upon insulin stimulation, translocates from these compartments to the cell surface where it transports glucose from the extracellular milieu into the cell. The sequence is that of Solute carrier family 2, facilitated glucose transporter member 4 from Bos taurus (Bovine).